The chain runs to 233 residues: Protein lin-7 homolog A (233 aa).

One can recognise an L27 domain in the interval 25–80 (LDRDVARAIELLEKLQESGEVPVHKLQSLKKVLQSEFCTAIREVYQYMHETITVNG). The PDZ domain occupies 108–190 (VVELPKTDEG…SVKLVVRYTP (83 aa)).

This sequence belongs to the lin-7 family. Forms a complex with CASK and CASKIN1. Component of the brain-specific heterotrimeric complex (LIN-10-LIN-2-LIN-7 complex) composed of at least APBA1, CASK, and LIN7, which associates with the motor protein KIF17 to transport vesicles along microtubules. Can also interact with other modular proteins containing protein-protein interaction domains like PALS1, PALS2, MPP7, DLG1, DLG2 and DLG3 through its L27 domain. Interacts with DLG4, GRIN2B and MARCHF11 as well as CDH1 and CTNNB1, the channels KCNJ12/Kir2.2, KCNJ4/Kir2.3 and probably KCNJ2/Kir2.1 and SLC6A12/BGT-1 via its PDZ domain. The association of LIN7A with cadherin and beta-catenin is calcium-dependent, occurs at synaptic junctions and requires the actin cytoskeleton. Interacts with EGFR, ERBB2, ERBB3 and ERBB4 with both PDZ and KID domains. Associates with KIF17 via APBA1. Interacts with HTR4. Forms a tripartite complex composed of DLG1, MPP7 and LIN7 (LIN7A or LIN7C).

It is found in the cell membrane. The protein resides in the basolateral cell membrane. Its subcellular location is the cell junction. The protein localises to the postsynaptic density membrane. It localises to the tight junction. Functionally, plays a role in establishing and maintaining the asymmetric distribution of channels and receptors at the plasma membrane of polarized cells. Forms membrane-associated multiprotein complexes that may regulate delivery and recycling of proteins to the correct membrane domains. The tripartite complex composed of LIN7 (LIN7A, LIN7B or LIN7C), CASK and APBA1 associates with the motor protein KIF17 to transport vesicles containing N-methyl-D-aspartate (NMDA) receptor subunit NR2B along microtubules. This complex may have the potential to couple synaptic vesicle exocytosis to cell adhesion in brain. Ensures the proper localization of GRIN2B (subunit 2B of the NMDA receptor) to neuronal postsynaptic density and may function in localizing synaptic vesicles at synapses where it is recruited by beta-catenin and cadherin. Required to localize Kir2 channels, GABA transporter (SLC6A12) and EGFR/ERBB1, ERBB2, ERBB3 and ERBB4 to the basolateral membrane of epithelial cells. The chain is Protein lin-7 homolog A (LIN7A) from Bos taurus (Bovine).